The chain runs to 142 residues: Hemoglobin subunit alpha (142 aa).

The Globin domain occupies 2–142 (VLSDANKQEI…LVHQLSSKYR (141 aa)). Histidine 60 contacts O2. Histidine 89 provides a ligand contact to heme b.

Belongs to the globin family. As to quaternary structure, heterotetramer of two alpha chains and two beta chains. As to expression, red blood cells.

Functionally, involved in oxygen transport from gills to the various peripheral tissues. In Bathyraja eatonii (Eaton's skate), this protein is Hemoglobin subunit alpha (HBA).